Here is a 214-residue protein sequence, read N- to C-terminus: Large ribosomal subunit protein uL3 (214 aa).

The interval 134–161 (THGNSLSHRAPGSIGQCQTPGRVMKGKK) is disordered. The residue at position 151 (Q151) is an N5-methylglutamine.

Belongs to the universal ribosomal protein uL3 family. Part of the 50S ribosomal subunit. Forms a cluster with proteins L14 and L19. Post-translationally, methylated by PrmB.

In terms of biological role, one of the primary rRNA binding proteins, it binds directly near the 3'-end of the 23S rRNA, where it nucleates assembly of the 50S subunit. This Teredinibacter turnerae (strain ATCC 39867 / T7901) protein is Large ribosomal subunit protein uL3.